The sequence spans 260 residues: Serine/threonine-protein acetyltransferase NGR_a02610 (260 aa).

Active-site residues include His123 and Glu143. His123 is a CoA binding site. 180 to 181 is a binding site for CoA; that stretch reads KS. Cys185 is a catalytic residue.

The protein belongs to the acetyltransferase YopJ family.

It catalyses the reaction L-threonyl-[protein] + acetyl-CoA = O-acetyl-L-threonyl-[protein] + CoA. The catalysed reaction is L-seryl-[protein] + acetyl-CoA = O-acetyl-L-seryl-[protein] + CoA. Its function is as follows. Serine/threonine-protein acetyltransferase translocated into infected cells, which mediates acetylation of serine and threonine residues of host target proteins. The protein is Serine/threonine-protein acetyltransferase NGR_a02610 of Sinorhizobium fredii (strain NBRC 101917 / NGR234).